The chain runs to 123 residues: Thioredoxin H-type 1 (123 aa).

N-acetylalanine is present on Ala2. Residues 2 to 119 (AATAEVIPAG…IEAKLLKHSQ (118 aa)) form the Thioredoxin domain. Cys45 and Cys48 are oxidised to a cystine.

Belongs to the thioredoxin family. Plant H-type subfamily.

It localises to the cytoplasm. Functionally, participates in various redox reactions through the reversible oxidation of the active center dithiol to a disulfide. The H form is known to activate a number of cytosolic enzymes. In Brassica napus (Rape), this protein is Thioredoxin H-type 1 (THL-1).